A 562-amino-acid chain; its full sequence is Protein wntless (562 aa).

Residues 1–13 lie on the Cytoplasmic side of the membrane; the sequence is MSGTILENLSGRK. The helical transmembrane segment at 14–34 threads the bilayer; sequence LSILVGSLLLCQVLCFLLGGL. Residues 35-239 are Lumenal-facing; that stretch reads YAPVPAGHTN…AIHQNGGFTH (205 aa). Residue Asn58 is glycosylated (N-linked (GlcNAc...) asparagine). Residues 240 to 260 traverse the membrane as a helical segment; the sequence is VWLMLKTLLFPFVVGIMVWFW. Over 261-270 the chain is Cytoplasmic; sequence RRVHLLQRSP. A helical transmembrane segment spans residues 271–291; the sequence is ALLEYMLLYLGGALTFLNLPL. The Lumenal portion of the chain corresponds to 292 to 311; the sequence is EYLSLTIEMPYMLLLSDIRQ. Residues 312-332 traverse the membrane as a helical segment; it reads GIFYAMLLSFWLVFAGEHMLI. Over 333–344 the chain is Cytoplasmic; that stretch reads QDSSNKSTIRSR. A helical transmembrane segment spans residues 345 to 365; that stretch reads YWKHLSAVVVGCISLFVFDIS. Topologically, residues 366-386 are lumenal; the sequence is ERGVQLRNPFYSIWTTPLGAK. The chain crosses the membrane as a helical span at residues 387–407; that stretch reads VAMSFILLAGVSAAVYFLFLC. Residues 408 to 441 lie on the Cytoplasmic side of the membrane; sequence YMISKVFKNIGDKRTSLPSMSQARRLHYEGLIYR. Residues 442–462 form a helical membrane-spanning segment; it reads FKFLMLATLLCAALTVTGFIM. Topologically, residues 463–482 are lumenal; the sequence is GQMAEGQWKWNDDVEIQLTS. A helical membrane pass occupies residues 483–503; that stretch reads AFLTGVYGMWNIYIFALLILY. Topologically, residues 504-562 are cytoplasmic; that stretch reads APSHKQWPTMHHSDETTQSNENIVASAASEEIEFSNLPSDSNPSEISSLTSFTRKVAFE. Residues 538-562 form a disordered region; sequence SNLPSDSNPSEISSLTSFTRKVAFE. Positions 539-556 are enriched in polar residues; sequence NLPSDSNPSEISSLTSFT.

It belongs to the wntless family. In terms of assembly, interacts with wg; in the Golgi. Interacts with Vps35, a component of the retromer complex; wls stability is regulated by Vps35.

It localises to the presynaptic cell membrane. The protein resides in the postsynaptic cell membrane. It is found in the cell membrane. Its subcellular location is the endoplasmic reticulum membrane. The protein localises to the endosome membrane. It localises to the golgi apparatus membrane. A segment polarity gene required for wingless (wg)-dependent patterning processes, acting in both wg-sending cells and wg-target cells. In non-neuronal cells wls directs wg secretion. The wls traffic loop encompasses the Golgi, the cell surface, an endocytic compartment and a retrograde route leading back to the Golgi, and involves clathrin-mediated endocytosis and the retromer complex (a conserved protein complex consisting of Vps35 and Vps26). In neuronal cells (the larval motorneuron NMJ), the wg signal moves across the synapse via the release of wls-containing exosome-like vesicles. Postsynaptic wls is required for the trafficking of fz2 through the fz2-interacting protein Grip. The protein is Protein wntless of Drosophila pseudoobscura pseudoobscura (Fruit fly).